We begin with the raw amino-acid sequence, 262 residues long: Small ribosomal subunit protein uS2 (262 aa).

Residues 225 to 262 (KQGEQLTEEAKPEDKEDEKGQAEEKEVKEENNSANKEE) are disordered. Residues 232-262 (EEAKPEDKEDEKGQAEEKEVKEENNSANKEE) show a composition bias toward basic and acidic residues.

This sequence belongs to the universal ribosomal protein uS2 family.

The protein is Small ribosomal subunit protein uS2 of Halothermothrix orenii (strain H 168 / OCM 544 / DSM 9562).